The following is a 474-amino-acid chain: ATP synthase subunit beta 2 (474 aa).

157 to 164 (GGAGVGKT) serves as a coordination point for ATP.

Belongs to the ATPase alpha/beta chains family. As to quaternary structure, F-type ATPases have 2 components, CF(1) - the catalytic core - and CF(0) - the membrane proton channel. CF(1) has five subunits: alpha(3), beta(3), gamma(1), delta(1), epsilon(1). CF(0) has three main subunits: a(1), b(2) and c(9-12). The alpha and beta chains form an alternating ring which encloses part of the gamma chain. CF(1) is attached to CF(0) by a central stalk formed by the gamma and epsilon chains, while a peripheral stalk is formed by the delta and b chains.

It localises to the cell inner membrane. It catalyses the reaction ATP + H2O + 4 H(+)(in) = ADP + phosphate + 5 H(+)(out). Functionally, produces ATP from ADP in the presence of a proton gradient across the membrane. The catalytic sites are hosted primarily by the beta subunits. The sequence is that of ATP synthase subunit beta 2 from Polaromonas naphthalenivorans (strain CJ2).